A 105-amino-acid chain; its full sequence is Large ribosomal subunit protein uL18c (105 aa).

Belongs to the universal ribosomal protein uL18 family. In terms of assembly, part of the 50S ribosomal subunit; contacts the 5S rRNA.

The protein resides in the plastid. It localises to the chloroplast. In terms of biological role, binds 5S rRNA, forms part of the central protuberance of the 50S subunit. The sequence is that of Large ribosomal subunit protein uL18c (rpl18) from Cyanidium caldarium (Red alga).